Reading from the N-terminus, the 97-residue chain is Integration host factor subunit alpha (97 aa).

Belongs to the bacterial histone-like protein family. As to quaternary structure, heterodimer of an alpha and a beta chain.

This protein is one of the two subunits of integration host factor, a specific DNA-binding protein that functions in genetic recombination as well as in transcriptional and translational control. The protein is Integration host factor subunit alpha of Acinetobacter baylyi (strain ATCC 33305 / BD413 / ADP1).